The chain runs to 545 residues: Glucose-6-phosphate isomerase (545 aa).

Residue glutamate 351 is the Proton donor of the active site. Catalysis depends on residues histidine 382 and lysine 510.

Belongs to the GPI family.

It is found in the cytoplasm. It carries out the reaction alpha-D-glucose 6-phosphate = beta-D-fructose 6-phosphate. It participates in carbohydrate biosynthesis; gluconeogenesis. The protein operates within carbohydrate degradation; glycolysis; D-glyceraldehyde 3-phosphate and glycerone phosphate from D-glucose: step 2/4. Its function is as follows. Catalyzes the reversible isomerization of glucose-6-phosphate to fructose-6-phosphate. This is Glucose-6-phosphate isomerase from Helicobacter pylori (strain HPAG1).